We begin with the raw amino-acid sequence, 148 residues long: D-aminoacyl-tRNA deacylase (148 aa).

Residues 136 to 137 (GP) carry the Gly-cisPro motif, important for rejection of L-amino acids motif.

Belongs to the DTD family. Homodimer.

It localises to the cytoplasm. It catalyses the reaction glycyl-tRNA(Ala) + H2O = tRNA(Ala) + glycine + H(+). The catalysed reaction is a D-aminoacyl-tRNA + H2O = a tRNA + a D-alpha-amino acid + H(+). An aminoacyl-tRNA editing enzyme that deacylates mischarged D-aminoacyl-tRNAs. Also deacylates mischarged glycyl-tRNA(Ala), protecting cells against glycine mischarging by AlaRS. Acts via tRNA-based rather than protein-based catalysis; rejects L-amino acids rather than detecting D-amino acids in the active site. By recycling D-aminoacyl-tRNA to D-amino acids and free tRNA molecules, this enzyme counteracts the toxicity associated with the formation of D-aminoacyl-tRNA entities in vivo and helps enforce protein L-homochirality. In Streptococcus mutans serotype c (strain ATCC 700610 / UA159), this protein is D-aminoacyl-tRNA deacylase.